A 136-amino-acid polypeptide reads, in one-letter code: ATP synthase F(0) complex subunit C1, mitochondrial (136 aa).

The N-terminal 61 residues, 1–61 (MQTTKALLIS…REFQTSVISR (61 aa)), are a transit peptide targeting the mitochondrion. The chain crosses the membrane as a helical span at residues 77-97 (VGVAGSGAGIGTVFGSLIIGY). Lys104 carries the post-translational modification N6,N6,N6-trimethyllysine. The helical transmembrane segment at 112–132 (ILGFALSEAMGLFCLMVAFLI) threads the bilayer.

The protein belongs to the ATPase C chain family. As to quaternary structure, homooctamer; the c-ring consists of eight c subunits forming a circle, and each subunit adopts a hairpin shape. Component of the ATP synthase complex composed at least of ATP5F1A/subunit alpha, ATP5F1B/subunit beta, ATP5MC1/subunit c (homooctomer), MT-ATP6/subunit a, MT-ATP8/subunit 8, ATP5ME/subunit e, ATP5MF/subunit f, ATP5MG/subunit g, ATP5MK/subunit k, ATP5MJ/subunit j, ATP5F1C/subunit gamma, ATP5F1D/subunit delta, ATP5F1E/subunit epsilon, ATP5PF/subunit F6, ATP5PB/subunit b, ATP5PD/subunit d, ATP5PO/subunit OSCP. ATP synthase complex consists of a soluble F(1) head domain (subunits alpha(3) and beta(3)) - the catalytic core - and a membrane F(0) domain - the membrane proton channel (subunits c, a, 8, e, f, g, k and j). These two domains are linked by a central stalk (subunits gamma, delta, and epsilon) rotating inside the F1 region and a stationary peripheral stalk (subunits F6, b, d, and OSCP). Interacts with TMEM70 (homooligomer form); this interaction facilitates the oligomer formation of subunit c/ATP5MC1 (c-ring) and the c-ring membrane insertion and also protects ATP5MC1 against intramitochondrial proteolysis. In terms of processing, trimethylated by ATPSCKMT at Lys-104. Methylation is required for proper incorporation of the C subunit into the ATP synthase complex and mitochondrial respiration.

The protein resides in the mitochondrion membrane. It carries out the reaction H(+)(in) = H(+)(out). Its function is as follows. Subunit c, of the mitochondrial membrane ATP synthase complex (F(1)F(0) ATP synthase or Complex V) that produces ATP from ADP in the presence of a proton gradient across the membrane which is generated by electron transport complexes of the respiratory chain. ATP synthase complex consist of a soluble F(1) head domain - the catalytic core - and a membrane F(1) domain - the membrane proton channel. These two domains are linked by a central stalk rotating inside the F(1) region and a stationary peripheral stalk. During catalysis, ATP synthesis in the catalytic domain of F(1) is coupled via a rotary mechanism of the central stalk subunits to proton translocation. With the subunit a (MT-ATP6), forms the proton-conducting channel in the F(0) domain, that contains two crucial half-channels (inlet and outlet) that facilitate proton movement from the mitochondrial intermembrane space (IMS) into the matrix. Protons are taken up via the inlet half-channel and released through the outlet half-channel, following a Grotthuss mechanism. This chain is ATP synthase F(0) complex subunit C1, mitochondrial, found in Rattus norvegicus (Rat).